Reading from the N-terminus, the 130-residue chain is Small ribosomal subunit protein uS9 (130 aa).

It belongs to the universal ribosomal protein uS9 family.

This is Small ribosomal subunit protein uS9 from Blochmanniella floridana.